Reading from the N-terminus, the 383-residue chain is 8-amino-7-oxononanoate synthase (383 aa).

R27 and R34 together coordinate substrate. G114–Y115 contributes to the pyridoxal 5'-phosphate binding site. H139 is a binding site for substrate. Pyridoxal 5'-phosphate is bound by residues S187, D212–H215, and T232–K235. N6-(pyridoxal phosphate)lysine is present on K235. A substrate-binding site is contributed by T344.

Belongs to the class-II pyridoxal-phosphate-dependent aminotransferase family. BioF subfamily. In terms of assembly, homodimer. Pyridoxal 5'-phosphate serves as cofactor.

The enzyme catalyses 6-carboxyhexanoyl-[ACP] + L-alanine + H(+) = (8S)-8-amino-7-oxononanoate + holo-[ACP] + CO2. Its pathway is cofactor biosynthesis; biotin biosynthesis. Catalyzes the decarboxylative condensation of pimeloyl-[acyl-carrier protein] and L-alanine to produce 8-amino-7-oxononanoate (AON), [acyl-carrier protein], and carbon dioxide. This chain is 8-amino-7-oxononanoate synthase, found in Methylorubrum extorquens (strain CM4 / NCIMB 13688) (Methylobacterium extorquens).